The sequence spans 207 residues: Phenazine biosynthesis protein PhzD1 (207 aa).

The Proton donor role is filled by Asp-38. Substrate contacts are provided by residues Gln-78, Arg-87, Lys-122, and 151–155; that span reads YAHVG.

Belongs to the isochorismatase family. Homodimer.

The enzyme catalyses (2S)-2-amino-4-deoxychorismate + H2O = (5S,6S)-6-amino-5-hydroxycyclohexa-1,3-diene-1-carboxyate + pyruvate. Its pathway is antibiotic biosynthesis; phenazine biosynthesis. Its function is as follows. Involved in the biosynthesis of the antibiotic phenazine, a nitrogen-containing heterocyclic molecule. PhzD1 (operon phzA1B1C1E1F1G1) has a role in the biosynthesis of the phenazine during planktonic growth. Catalyzes the hydrolysis of the vinyl ether functional group of 2-amino-2-deoxyisochorismate (ADIC), yielding pyruvate and trans-2,3-dihydro-3-hydroxyanthranilic acid (DHHA). Also able to act on isochorismate, chorismate and 4-amino-4-deoxychorismate (ADC) as substrates. The protein is Phenazine biosynthesis protein PhzD1 of Pseudomonas aeruginosa (strain ATCC 15692 / DSM 22644 / CIP 104116 / JCM 14847 / LMG 12228 / 1C / PRS 101 / PAO1).